We begin with the raw amino-acid sequence, 144 residues long: Large ribosomal subunit protein uL16m (144 aa).

Belongs to the universal ribosomal protein uL16 family.

Its subcellular location is the mitochondrion. The polypeptide is Large ribosomal subunit protein uL16m (mrpl16) (Dictyostelium discoideum (Social amoeba)).